The sequence spans 100 residues: Urease subunit gamma (100 aa).

It belongs to the urease gamma subunit family. Heterotrimer of UreA (gamma), UreB (beta) and UreC (alpha) subunits. Three heterotrimers associate to form the active enzyme.

It is found in the cytoplasm. The enzyme catalyses urea + 2 H2O + H(+) = hydrogencarbonate + 2 NH4(+). It functions in the pathway nitrogen metabolism; urea degradation; CO(2) and NH(3) from urea (urease route): step 1/1. This Corynebacterium efficiens (strain DSM 44549 / YS-314 / AJ 12310 / JCM 11189 / NBRC 100395) protein is Urease subunit gamma.